Consider the following 33-residue polypeptide: Photosystem II reaction center protein Psb30 (33 aa).

A helical transmembrane segment spans residues Val5–Leu25.

The protein belongs to the Psb30/Ycf12 family. PSII is composed of 1 copy each of membrane proteins PsbA, PsbB, PsbC, PsbD, PsbE, PsbF, PsbH, PsbI, PsbJ, PsbK, PsbL, PsbM, PsbT, PsbX, PsbY, PsbZ, Psb30/Ycf12, peripheral proteins of the oxygen-evolving complex and a large number of cofactors. It forms dimeric complexes.

It is found in the plastid. Its subcellular location is the chloroplast thylakoid membrane. In terms of biological role, a core subunit of photosystem II (PSII), probably helps stabilize the reaction center. This chain is Photosystem II reaction center protein Psb30, found in Huperzia lucidula (Shining clubmoss).